The following is a 493-amino-acid chain: Aluminum-activated malate transporter 1 (493 aa).

5 helical membrane passes run 28-48 (VGLA…GPFT), 51-71 (FGIN…FSVG), 104-124 (TVEP…STFV), 133-153 (KFDY…LSGF), and 169-189 (VVIG…VWAG). 2 positions are modified to phosphoserine: S320 and S327. A Phosphothreonine modification is found at T385. Basic and acidic residues predominate over residues 441 to 452 (DNDRSNNVDDSR). The segment at 441–460 (DNDRSNNVDDSRGGSSQDSC) is disordered.

Belongs to the aromatic acid exporter (TC 2.A.85) family. Phosphorylated. A reversible phosphorylation is required for activation. As to expression, expressed in roots, but not in shoots. Detected in the root apex in absence of aluminum stress and in root apices, the stele and endodermis of the elongating zone of primary and lateral roots after aluminum stress. Not expressed in cortical and epidermal cells.

The protein resides in the cell membrane. Its activity is regulated as follows. Activated by external aluminum. Malate transporter critical for aluminum tolerance. The STOP1 transcription factor is required for ALMT1 expression. In Arabidopsis thaliana (Mouse-ear cress), this protein is Aluminum-activated malate transporter 1 (ALMT1).